Consider the following 177-residue polypeptide: Coatomer subunit zeta-1 (177 aa).

Position 1 is an N-acetylmethionine (methionine 1).

The protein belongs to the adaptor complexes small subunit family. As to quaternary structure, oligomeric complex that consists of at least the alpha, beta, beta', gamma, delta, epsilon and zeta subunits.

The protein localises to the cytoplasm. Its subcellular location is the golgi apparatus membrane. It localises to the cytoplasmic vesicle. It is found in the COPI-coated vesicle membrane. The coatomer is a cytosolic protein complex that binds to dilysine motifs and reversibly associates with Golgi non-clathrin-coated vesicles, which further mediate biosynthetic protein transport from the ER, via the Golgi up to the trans Golgi network. Coatomer complex is required for budding from Golgi membranes, and is essential for the retrograde Golgi-to-ER transport of dilysine-tagged proteins. The zeta subunit may be involved in regulating the coat assembly and, hence, the rate of biosynthetic protein transport due to its association-dissociation properties with the coatomer complex. This Homo sapiens (Human) protein is Coatomer subunit zeta-1 (COPZ1).